We begin with the raw amino-acid sequence, 332 residues long: Cyclin-dependent kinase 1 (332 aa).

The Protein kinase domain maps to Phe-22–Phe-312. Residues Ile-28–Val-36 and Lys-51 contribute to the ATP site. Thr-32 carries the post-translational modification Phosphothreonine. Phosphotyrosine is present on Tyr-33. Catalysis depends on Asp-146, which acts as the Proton acceptor.

This sequence belongs to the protein kinase superfamily. CMGC Ser/Thr protein kinase family. CDC2/CDKX subfamily. In terms of assembly, forms a stable but non-covalent complex with a regulatory subunit and with a cyclin. Interacts with cks-1. Phosphorylated.

The protein resides in the nucleus. It localises to the cytoplasm. The protein localises to the cytoskeleton. It is found in the microtubule organizing center. Its subcellular location is the centrosome. The protein resides in the chromosome. The catalysed reaction is L-seryl-[protein] + ATP = O-phospho-L-seryl-[protein] + ADP + H(+). The enzyme catalyses L-threonyl-[protein] + ATP = O-phospho-L-threonyl-[protein] + ADP + H(+). It carries out the reaction [DNA-directed RNA polymerase] + ATP = phospho-[DNA-directed RNA polymerase] + ADP + H(+). With respect to regulation, phosphorylation both activates and inactivates the enzyme depending on the site of phosphorylation. In terms of biological role, plays a key role in the control of the eukaryotic cell cycle. Required for entry into S-phase and mitosis. Acts as a component of the kinase complex that phosphorylates the repetitive C-terminus of RNA polymerase II. May function in concert with npp-16 to arrest prophase blastomeres in response to anoxia. The protein is Cyclin-dependent kinase 1 (cdk-1) of Caenorhabditis elegans.